The chain runs to 366 residues: GTPase Obg (366 aa).

An Obg domain is found at 1–162; that stretch reads MRFVDEATIN…RRLRLELKIL (162 aa). Residues 163 to 335 enclose the OBG-type G domain; sequence ADAGLLGLPN…VVDAMWRLRD (173 aa). GTP is bound by residues 169-176, 194-198, 218-221, 288-291, and 316-318; these read GLPNAGKS, FTTLT, DIPG, NKID, and SAM. Mg(2+)-binding residues include Ser176 and Thr196.

Belongs to the TRAFAC class OBG-HflX-like GTPase superfamily. OBG GTPase family. In terms of assembly, monomer. Mg(2+) is required as a cofactor.

The protein resides in the cytoplasm. Its function is as follows. An essential GTPase which binds GTP, GDP and possibly (p)ppGpp with moderate affinity, with high nucleotide exchange rates and a fairly low GTP hydrolysis rate. Plays a role in control of the cell cycle, stress response, ribosome biogenesis and in those bacteria that undergo differentiation, in morphogenesis control. The chain is GTPase Obg from Nitratidesulfovibrio vulgaris (strain ATCC 29579 / DSM 644 / CCUG 34227 / NCIMB 8303 / VKM B-1760 / Hildenborough) (Desulfovibrio vulgaris).